Here is a 387-residue protein sequence, read N- to C-terminus: Aminodeoxyfutalosine deaminase (387 aa).

Residues 1 to 10 show a composition bias toward basic and acidic residues; sequence MRPAYDDPRT. The tract at residues 1 to 37 is disordered; sequence MRPAYDDPRTTDQPITRARPPPRAARGRRLGEEPLTE. Residues H61 and H63 each coordinate Zn(2+). Residues R116, D183, and G217 each coordinate substrate. Zn(2+) is bound at residue H244. The active-site Proton donor is E247. D325 lines the Zn(2+) pocket.

The protein belongs to the metallo-dependent hydrolases superfamily. Adenosine and AMP deaminases family. Zn(2+) is required as a cofactor.

It carries out the reaction 6-amino-6-deoxyfutalosine + H2O + H(+) = futalosine + NH4(+). The protein operates within quinol/quinone metabolism; menaquinone biosynthesis. Functionally, catalyzes the deamination of aminodeoxyfutalosine (AFL) into futalosine (FL), a step in the biosynthesis of menaquinone (MK, vitamin K2). This chain is Aminodeoxyfutalosine deaminase, found in Streptomyces coelicolor (strain ATCC BAA-471 / A3(2) / M145).